The following is a 62-amino-acid chain: Large ribosomal subunit protein uL30 (62 aa).

This sequence belongs to the universal ribosomal protein uL30 family. In terms of assembly, part of the 50S ribosomal subunit.

The chain is Large ribosomal subunit protein uL30 from Roseobacter denitrificans (strain ATCC 33942 / OCh 114) (Erythrobacter sp. (strain OCh 114)).